The chain runs to 126 residues: MAQIPPSLQDLVNRFNQAQAQLQNVLLRKQQYEAELKEVEKAISEIERLPQDAKIFKNVGNFLVPQSRDVALQELRDRKELLELHVKTLTRQESMLREQLDKLREEINKELAKLKGGATEAAKGGG.

The protein belongs to the prefoldin subunit beta family. In terms of assembly, heterohexamer of two alpha and four beta subunits.

It is found in the cytoplasm. Functionally, molecular chaperone capable of stabilizing a range of proteins. Seems to fulfill an ATP-independent, HSP70-like function in archaeal de novo protein folding. The chain is Prefoldin subunit beta (pfdB) from Pyrobaculum aerophilum (strain ATCC 51768 / DSM 7523 / JCM 9630 / CIP 104966 / NBRC 100827 / IM2).